An 838-amino-acid polypeptide reads, in one-letter code: DNA gyrase subunit A (838 aa).

Position 2 is an N-acetylthreonine (Thr-2). A Topo IIA-type catalytic domain is found at 41-510; the sequence is LPEVRDGLKP…ADGDVSDEDL (470 aa). The active-site O-(5'-phospho-DNA)-tyrosine intermediate is the Tyr-129. 4 residues coordinate Ca(2+): Asp-504, Ser-506, Glu-508, and Asp-515. In terms of domain architecture, EF-hand spans 504–516; sequence DVSDEDLIAREDV. The segment at 514-838 is C-terminal domain CTD; that stretch reads EDVVVTITET…DANGADQTGN (325 aa). A GyrA-box motif is present at residues 537–543; it reads QKRGGKG. The GyrA-box-1 signature appears at 743 to 749; sequence QGRGGKG.

The protein belongs to the type II topoisomerase GyrA/ParC subunit family. Heterotetramer, composed of two GyrA and two GyrB chains. In the heterotetramer, GyrA contains the active site tyrosine that forms a transient covalent intermediate with DNA, while GyrB binds cofactors and catalyzes ATP hydrolysis. The cofactor is Ca(2+).

The protein localises to the cytoplasm. The catalysed reaction is ATP-dependent breakage, passage and rejoining of double-stranded DNA.. Its activity is regulated as follows. DNA supercoiling inhibited by (fluoro)quinoline antibiotics such as sparfloxacin and levofloxacin, which usually act on GyrA. DNA supercoiling inhibited by the coumarin antibiotic novobiocin which acts on GyrB. Quinolones lead to gyrase-mediated dsDNA cleavage while preventing reclosure. DNA supercoiling activity inhibited by aminopyrazinamide and pyrrolamide derivatives, probably via effects on the GyrB subunit. DNA relaxation inhibited by ATP and its analogs. DNA supercoiling, relaxation, decatenation and quinolone-promoted DNA cleavage are inhibited by MfpA (50% inhibition occurs at 2 uM), inhibition of gyrase activities is enhanced in a concentration-dependent manner by MfpA. Its function is as follows. A type II topoisomerase that negatively supercoils closed circular double-stranded (ds) DNA in an ATP-dependent manner to maintain chromosomes in an underwound state, while in the absence of ATP it relaxes supercoiled dsDNA. Also catalyzes the interconversion of other topological isomers of dsDNA rings, including catenanes. Gyrase from M.tuberculosis has higher decatenation than supercoiling activity compared to E.coli; as M.tuberculosis only has 1 type II topoisomerase, gyrase has to fulfill the decatenation function of topoisomerase IV as well. At comparable concentrations M.tuberculosis gyrase cannot introduce as many negative supercoils into DNA as the E.coli enzyme, and its ATPase activity is lower, perhaps because it does not couple DNA wrapping and ATP binding as well as E.coli. In terms of biological role, negative supercoiling favors strand separation, and DNA replication, transcription, recombination and repair, all of which involve strand separation. Type II topoisomerases break and join 2 DNA strands simultaneously in an ATP-dependent manner. The chain is DNA gyrase subunit A from Mycobacterium tuberculosis (strain ATCC 25618 / H37Rv).